The primary structure comprises 665 residues: GTPase IMAP family member 8 (665 aa).

One can recognise an AIG1-type G 1 domain in the interval 8–210; it reads MSELRLLLLG…HVNFKTEGSR (203 aa). Residues 17 to 24 form a G1 region; sequence GKCRSGKS. GTP-binding positions include 17 to 25 and serine 38; that span reads GKCRSGKSA. The tract at residues 44 to 48 is G2; sequence TVIKM. Positions 65–68 are G3; sequence DTPD. The segment at 134 to 137 is G4; sequence TRKD. GTP is bound by residues 135 to 137 and asparagine 170; that span reads RKD. Residues 169-171 are G5; sequence NNK. The disordered stretch occupies residues 217-246; that stretch reads EAASQEGDKPQGPRERQLQSTGPEQNPGTS. Residues 222–233 show a composition bias toward basic and acidic residues; it reads EGDKPQGPRERQ. Residues 234–246 are compositionally biased toward polar residues; sequence LQSTGPEQNPGTS. AIG1-type G domains follow at residues 245–435 and 436–644; these read TSEL…VFRE and KETL…SKLI. Coiled-coil stretches lie at residues 400–427 and 608–657; these read NYRA…HQNG and QAQE…EKLL.

It belongs to the TRAFAC class TrmE-Era-EngA-EngB-Septin-like GTPase superfamily. AIG1/Toc34/Toc159-like paraseptin GTPase family. IAN subfamily. As to expression, expressed in the spleen, intestine, liver, and colon, as well as in lung, placenta, kidney, muscle, and heart. Extremely low expression, if any, in brain, in thymus, bone marrow, and blood leukocytes. Detected in T-cells.

The protein resides in the endoplasmic reticulum. Its subcellular location is the golgi apparatus. It is found in the mitochondrion. It localises to the cytoplasm. The protein localises to the cytosol. Its function is as follows. Exerts an anti-apoptotic effect in the immune system and is involved in responses to infections. The protein is GTPase IMAP family member 8 (GIMAP8) of Homo sapiens (Human).